Reading from the N-terminus, the 1429-residue chain is Autophagy-related protein 11 (1429 aa).

The tract at residues 71–99 (TQRSQPGASSPPLSELPLPRYNAHTPPNS) is disordered. The segment covering 80–89 (SPPLSELPLP) has biased composition (low complexity). Coiled-coil stretches lie at residues 143–173 (VMLRCLDAAVANLENAVKGLENKYVELKEWS), 553–590 (DDLLRSLQADKTRLESKLKTAESRVRRLEDLLHRQTQA), 632–815 (LETL…LEDI), and 851–989 (EGDM…RLES). The segment at 1024 to 1061 (DGTMHIQRTPRSERSLATTANPNDSDPSSSLRRSSTLN) is disordered. Low complexity predominate over residues 1042 to 1061 (TANPNDSDPSSSLRRSSTLN). Residues 1105 to 1143 (ADAVYRRVKDVEHMARKLQREARAYREKAHSFQKEAHDK) adopt a coiled-coil conformation. Residues 1209 to 1229 (SKSLQHDQAGETRKDGARGET) show a composition bias toward basic and acidic residues. 2 disordered regions span residues 1209-1241 (SKSLQHDQAGETRKDGARGETESLDDDENDNPF) and 1336-1429 (SSRG…LIGP). The span at 1230–1239 (ESLDDDENDN) shows a compositional bias: acidic residues. 2 stretches are compositionally biased toward polar residues: residues 1345-1372 (ASETNSLRAVPADNNSSAPTNAAQQHMS) and 1383-1393 (QETPQQTNSIS).

This sequence belongs to the ATG11 family. In terms of assembly, homodimer.

The protein resides in the preautophagosomal structure membrane. Its subcellular location is the vacuole membrane. Involved in cytoplasm to vacuole transport (Cvt), pexophagy, mitophagy and nucleophagy. Recruits mitochondria for their selective degradation via autophagy (mitophagy) during starvation. Works as scaffold proteins that recruit ATG proteins to the pre-autophagosome (PAS), the site of vesicle/autophagosome formation. Required for the Cvt vesicles completion. This Neurospora crassa (strain ATCC 24698 / 74-OR23-1A / CBS 708.71 / DSM 1257 / FGSC 987) protein is Autophagy-related protein 11 (apg-8).